We begin with the raw amino-acid sequence, 32 residues long: Photosystem I reaction center subunit XII (32 aa).

A helical membrane pass occupies residues 9–31 (VYVALVSALITSFLAVRLGLALY).

The protein belongs to the PsaM family.

The protein resides in the plastid. It localises to the chloroplast thylakoid membrane. In Chaetosphaeridium globosum (Charophycean green alga), this protein is Photosystem I reaction center subunit XII.